Reading from the N-terminus, the 346-residue chain is Large ribosomal subunit protein uL1c (346 aa).

The N-terminal 70 residues, 1–70 (MAACATHSSL…RASNHKFIVS (70 aa)), are a transit peptide targeting the chloroplast. Tyr-129 carries the post-translational modification Phosphotyrosine. The residue at position 177 (Thr-177) is a Phosphothreonine. The residue at position 197 (Ser-197) is a Phosphoserine.

Belongs to the universal ribosomal protein uL1 family. In terms of assembly, part of the 50S ribosomal subunit.

The protein localises to the plastid. It localises to the chloroplast. Its function is as follows. This protein binds directly to 23S ribosomal RNA. The protein is Large ribosomal subunit protein uL1c (RPL1) of Arabidopsis thaliana (Mouse-ear cress).